Reading from the N-terminus, the 231-residue chain is uncharacterized protein (231 aa).

The next 7 helical transmembrane spans lie at 26–46 (TYSWMAAGLALTAGVAYLTAQ), 56–76 (SLRLPLMLAQLALVFVLSMFA), 84–104 (AGALFVGYAALTGLTFSALLF), 112–132 (ITAFAVSAGTFGLMSVAGFVI), 142–162 (FFLFAVLGLVVAMLVNLFVGS), 163–183 (SALSLGISMIGVFLFAGLTAY), and 206–226 (INGALALYLDFINIFLFLLNI).

This sequence belongs to the BI1 family.

It localises to the cell membrane. This is an uncharacterized protein from Deinococcus radiodurans (strain ATCC 13939 / DSM 20539 / JCM 16871 / CCUG 27074 / LMG 4051 / NBRC 15346 / NCIMB 9279 / VKM B-1422 / R1).